Consider the following 168-residue polypeptide: Endoribonuclease YbeY (168 aa).

Zn(2+) contacts are provided by His-126, His-130, and His-136.

The protein belongs to the endoribonuclease YbeY family. Zn(2+) is required as a cofactor.

It is found in the cytoplasm. Single strand-specific metallo-endoribonuclease involved in late-stage 70S ribosome quality control and in maturation of the 3' terminus of the 16S rRNA. This Rhizobium meliloti (strain 1021) (Ensifer meliloti) protein is Endoribonuclease YbeY.